We begin with the raw amino-acid sequence, 179 residues long: Large ribosomal subunit protein uL5 (179 aa).

It belongs to the universal ribosomal protein uL5 family. Part of the 50S ribosomal subunit; part of the 5S rRNA/L5/L18/L25 subcomplex. Contacts the 5S rRNA and the P site tRNA. Forms a bridge to the 30S subunit in the 70S ribosome.

In terms of biological role, this is one of the proteins that bind and probably mediate the attachment of the 5S RNA into the large ribosomal subunit, where it forms part of the central protuberance. In the 70S ribosome it contacts protein S13 of the 30S subunit (bridge B1b), connecting the 2 subunits; this bridge is implicated in subunit movement. Contacts the P site tRNA; the 5S rRNA and some of its associated proteins might help stabilize positioning of ribosome-bound tRNAs. This Shewanella amazonensis (strain ATCC BAA-1098 / SB2B) protein is Large ribosomal subunit protein uL5.